Reading from the N-terminus, the 179-residue chain is MEKIIIDAEQFQRTISRISHQIIEKHSSLDNLVLVGIKRRGAEIAEMLQSRIAELAQTELPLMALDITFYRDDLHLDHQDPVYTGVESQIDITGKNVILIDDVLFTGRTIRAALDALLDFGRATRIELVILVDRGHRELPIRADYVGKNIPTARTEQVQVRTQFYDGMNQVVLIRAKDE.

The PRPP-binding signature appears at 97 to 109 (VILIDDVLFTGRT).

It belongs to the purine/pyrimidine phosphoribosyltransferase family. PyrR subfamily.

The enzyme catalyses UMP + diphosphate = 5-phospho-alpha-D-ribose 1-diphosphate + uracil. Functionally, regulates the transcription of the pyrimidine nucleotide (pyr) operon in response to exogenous pyrimidines. Also displays a weak uracil phosphoribosyltransferase activity which is not physiologically significant. In Actinobacillus pleuropneumoniae serotype 5b (strain L20), this protein is Bifunctional protein PyrR.